We begin with the raw amino-acid sequence, 104 residues long: Small ribosomal subunit protein uS10 (104 aa).

It belongs to the universal ribosomal protein uS10 family. In terms of assembly, part of the 30S ribosomal subunit.

Involved in the binding of tRNA to the ribosomes. The protein is Small ribosomal subunit protein uS10 of Thermosynechococcus vestitus (strain NIES-2133 / IAM M-273 / BP-1).